The sequence spans 211 residues: Urease accessory protein UreF (211 aa).

This sequence belongs to the UreF family. UreD, UreF and UreG form a complex that acts as a GTP-hydrolysis-dependent molecular chaperone, activating the urease apoprotein by helping to assemble the nickel containing metallocenter of UreC. The UreE protein probably delivers the nickel.

The protein localises to the cytoplasm. Required for maturation of urease via the functional incorporation of the urease nickel metallocenter. The chain is Urease accessory protein UreF from Mycobacterium sp. (strain JLS).